We begin with the raw amino-acid sequence, 99 residues long: Small ribosomal subunit protein uS14m (99 aa).

It belongs to the universal ribosomal protein uS14 family.

It localises to the mitochondrion. This Acanthamoeba castellanii (Amoeba) protein is Small ribosomal subunit protein uS14m (RPS14).